Reading from the N-terminus, the 134-residue chain is Large ribosomal subunit protein bL20 (134 aa).

It belongs to the bacterial ribosomal protein bL20 family.

Its function is as follows. Binds directly to 23S ribosomal RNA and is necessary for the in vitro assembly process of the 50S ribosomal subunit. It is not involved in the protein synthesizing functions of that subunit. The chain is Large ribosomal subunit protein bL20 from Allorhizobium ampelinum (strain ATCC BAA-846 / DSM 112012 / S4) (Agrobacterium vitis (strain S4)).